The primary structure comprises 335 residues: Serine protease 42 (335 aa).

A signal peptide spans 1–24; the sequence is MASGGGSLGLIVFLLLLQPKPCEA. An N-linked (GlcNAc...) asparagine glycan is attached at asparagine 67. One can recognise a Peptidase S1 domain in the interval 79 to 315; that stretch reads IMGGVDAEEG…YSKWLIAVVN (237 aa). Cysteine 104 and cysteine 120 are oxidised to a cystine. Residue histidine 119 is the Charge relay system of the active site. N-linked (GlcNAc...) asparagine glycosylation occurs at asparagine 140. The active-site Charge relay system is the aspartate 165. Residue asparagine 176 is glycosylated (N-linked (GlcNAc...) asparagine). Cystine bridges form between cysteine 199–cysteine 273, cysteine 232–cysteine 253, and cysteine 263–cysteine 291. Catalysis depends on serine 267, which acts as the Charge relay system.

It belongs to the peptidase S1 family. As to expression, testis-specific. Mainly detected in round spermatids at all the eminiferous epithelial stages (at protein level).

The protein resides in the cytoplasm. It localises to the cell membrane. Its function is as follows. Plays a role in spermatogenesis. Involved in germ cell survival during meiosis. Lacks protease activity in vitro. The polypeptide is Serine protease 42 (Mus musculus (Mouse)).